The following is a 493-amino-acid chain: MALQFTLNQDAPASAHVDCIVVGAFADKTLSPAAQALDSASQGRLTALVARGDVATKTGTTSLVHDLPGVQAPRVLVVGLGDAAKFGVAPYLKAIGDAARALKTGPIGTALLTLTELPVKARDAAWNIRQAVIVSDHAAYRYTATLGKKKVDDTGLTTLAIAGDDARALAVGIATAEGVEFARELGNLPPNYCTPAYLAETAAAFAGKFPGAEAEILDEQQMEALGMGSLLSVARGSANRPRLIVLKWNGGGEARPYVLVGKGITFDTGGVNLKTQGGIEEMKYDMCGGANVIGTFVATVKAELPINLVVVVPAVENAIDGNAYRPSDVITSMSGKTIEVGNTDAEGRLILCDALTYAERFNPEALVDVATLTGACMVALGHQTAGLMSKHDDLANELLAAGEHVFDRAWRLPLWDEYQGLLDSTFADVYNIGGRWGGAITAGCFLSRFTENQRWAHLDIAGVASDEGKRGMATGRPVGLLTQWLLDRAEGGN.

Lysine 262 and aspartate 267 together coordinate Mn(2+). Lysine 274 is an active-site residue. Residues aspartate 285, aspartate 344, and glutamate 346 each contribute to the Mn(2+) site. Arginine 348 is a catalytic residue.

It belongs to the peptidase M17 family. It depends on Mn(2+) as a cofactor.

It localises to the cytoplasm. It catalyses the reaction Release of an N-terminal amino acid, Xaa-|-Yaa-, in which Xaa is preferably Leu, but may be other amino acids including Pro although not Arg or Lys, and Yaa may be Pro. Amino acid amides and methyl esters are also readily hydrolyzed, but rates on arylamides are exceedingly low.. It carries out the reaction Release of an N-terminal amino acid, preferentially leucine, but not glutamic or aspartic acids.. Functionally, presumably involved in the processing and regular turnover of intracellular proteins. Catalyzes the removal of unsubstituted N-terminal amino acids from various peptides. This chain is Probable cytosol aminopeptidase, found in Xanthomonas campestris pv. campestris (strain 8004).